A 528-amino-acid chain; its full sequence is uncharacterized protein (528 aa).

Residue 6 to 35 (DYVVVGTGSAGAVVASRLSTDPATTVVALE) coordinates FAD. Residue histidine 468 is the Proton acceptor of the active site.

This sequence belongs to the GMC oxidoreductase family. It depends on FAD as a cofactor.

This is an uncharacterized protein from Mycobacterium bovis (strain ATCC BAA-935 / AF2122/97).